The following is a 138-amino-acid chain: Large ribosomal subunit protein uL29 (138 aa).

Positions 1–79 are large ribosomal subunit protein uL29; that stretch reads MAKSKMLDLR…TNKVIKADYN (79 aa). Positions 80 to 138 are unknown; sequence KAVEEAEKAGKEVRAKQRKFLEEQYGQQSQTKVNEADIQKAMQAAEQETVEPDTKGETK. Residues 103–138 are disordered; it reads QYGQQSQTKVNEADIQKAMQAAEQETVEPDTKGETK.

It belongs to the universal ribosomal protein uL29 family.

The polypeptide is Large ribosomal subunit protein uL29 (Mycoplasma capricolum subsp. capricolum (strain California kid / ATCC 27343 / NCTC 10154)).